A 318-amino-acid polypeptide reads, in one-letter code: ATP-dependent (S)-NAD(P)H-hydrate dehydratase (318 aa).

Positions 3–313 (AREVFKRVIP…KEIGPAFDSL (311 aa)) constitute a YjeF C-terminal domain. Residues G119 and 172–178 (NTNEFKR) each bind (6S)-NADPHX. ATP is bound by residues 210–214 (KGSKD) and 229–238 (TSLRRCGGQG). A (6S)-NADPHX-binding site is contributed by D239.

Belongs to the NnrD/CARKD family. Mg(2+) is required as a cofactor.

It localises to the cytoplasm. It carries out the reaction (6S)-NADHX + ATP = ADP + phosphate + NADH + H(+). The enzyme catalyses (6S)-NADPHX + ATP = ADP + phosphate + NADPH + H(+). Catalyzes the dehydration of the S-form of NAD(P)HX at the expense of ATP, which is converted to ADP. Together with NAD(P)HX epimerase, which catalyzes the epimerization of the S- and R-forms, the enzyme allows the repair of both epimers of NAD(P)HX, a damaged form of NAD(P)H that is a result of enzymatic or heat-dependent hydration. The sequence is that of ATP-dependent (S)-NAD(P)H-hydrate dehydratase from Batrachochytrium dendrobatidis (strain JAM81 / FGSC 10211) (Frog chytrid fungus).